A 748-amino-acid chain; its full sequence is MNRTVVSGAVESSFSLTDAVGTEALNMQRSSGINNNMRIPTSPMSFSSNSVNIPGSLVLDGSAASMQHLPQQQQQQLLQQQTGQGSVPMRENNYSHVDKKPRLEVKQEDMLQQQILQQLIQRQDPTGRNPQMQALLQQQRLRQHQQMLQSMSPSQRLQLQQQQQLRQQLQQQGTQQIPPNVRPYEVGVCARKLMMYLYHLQQRPAENCITYWRKFVAEYFSPRAKQRLCLSQYESAGHHALGMFPQAAPDMWQCDLCGTKSGKGFEATFDVLARLIEIKFASGIIDELLYLDHPRENRFPNGLMMLEYRKAVQETVHEQFRVVREGHLRIIFSQDLKILSWEFCARRHEELLLRRLIAPQVNQLLQVAQKCQSTISESGSEGVSQQDLQSNSNMVLGAGRQLAKFMELQSLNDLGYPKRYIRTLQISEVVKSMKDLMNFTGEQKIGPIEGLKRLLEQTVTVKLQKQKMQEMEQFGNNGAINGPVQAQMVLTSGTMNGSTGNNTNNHHQIVGRGAMSGPAEGQMVISSGTVSGATANNNSNNHNQIVGRGAMNGSAQAAAALTNYQSMLMRQNAMNNPNSNTGKQEGFSSQNPTPNSNQSPSSSSQQRHNLVTGGFPNSPQMQQQQRTMNGPTNILPQNHPHQLQSPHSHGNTPEQQMLHQLLQEMSENGGSVQQQQAFSGQSGSNSNAERNTTASTSNISGGGRAPSRNNSFKAASNNNLHFSEDISITDHDFSEDGFFNNNDIYGGL.

Disordered regions lie at residues 67–93 and 138–163; these read QHLP…RENN and QQRL…QQQQ. The segment covering 71-81 has biased composition (low complexity); that stretch reads QQQQQQLLQQQ. A dimerization region spans residues 204–451; the sequence is PAENCITYWR…EQKIGPIEGL (248 aa). The Nuclear localization signal motif lies at 213–227; it reads RKFVAEYFSPRAKQR. Residues 572-587 show a composition bias toward polar residues; that stretch reads NAMNNPNSNTGKQEGF. 2 disordered regions span residues 572-653 and 667-712; these read NAMN…GNTP and ENGG…NNSF. Residues 588 to 606 show a composition bias toward low complexity; sequence SSQNPTPNSNQSPSSSSQQ. Positions 615-653 are enriched in polar residues; the sequence is FPNSPQMQQQQRTMNGPTNILPQNHPHQLQSPHSHGNTP. Positions 667–686 are enriched in low complexity; the sequence is ENGGSVQQQQAFSGQSGSNS. Residues 687–699 are compositionally biased toward polar residues; that stretch reads NAERNTTASTSNI.

The protein belongs to the adn1/SEU family. In terms of assembly, forms corepressor complexes with LUH; LUH is the transcription repressor subunit and SLK1 the specific DNA-binding adapters. In terms of tissue distribution, expressed in young flower meristems, ovules and the carpel margin meristem.

It localises to the nucleus. Functionally, probable transcription regulator that functions in the development of the carpel margin meristem similarly to SEUSS (SEU). In association with SEU, supports organ development from meristematic regions by facilitating auxin response and thus organ initiation, and by sustaining meristematic potential through the maintenance of PHABULOSA expression. DNA-binding adapter subunit of the SEU-SLK1 transcriptional corepressor of abiotic stress (e.g. salt and osmotic stress) response genes. In Arabidopsis thaliana (Mouse-ear cress), this protein is Probable transcriptional regulator SLK1 (SLK1).